Reading from the N-terminus, the 245-residue chain is MAPK-interacting and spindle-stabilizing protein-like (245 aa).

Positions 1–245 (MSDEFSLADA…PMPGGPHSYH (245 aa)) are disordered. Position 2 is an N-acetylserine (serine 2). Phosphoserine occurs at positions 2, 6, and 15. Residues 17–26 (AKTSAVSNTK) are compositionally biased toward polar residues. Residues 34–51 (WPGSNPWNNPSAPSSVPS) show a composition bias toward low complexity. Pro residues-rich tracts occupy residues 74–127 (SVPP…PELP), 164–190 (PNMPYPSPGPYPAPPPPQAPGAAPPVP), and 198–207 (AWGPPAPYPA).

Belongs to the MISS family.

This is MAPK-interacting and spindle-stabilizing protein-like (MAPK1IP1L) from Homo sapiens (Human).